A 257-amino-acid polypeptide reads, in one-letter code: Protein orai-2 (257 aa).

Helical transmembrane passes span 67 to 84, 95 to 115, 149 to 169, and 199 to 219; these read TSAL…EVQL, LIAF…ALLI, LAWG…VVLL, and AALV…VFTI.

Belongs to the Orai family.

It localises to the membrane. Functionally, ca(2+) release-activated Ca(2+)-like (CRAC-like) channel subunit which mediates Ca(2+) influx and increase in Ca(2+)-selective current by synergy with the Ca(2+) sensor, STIM1. This Gallus gallus (Chicken) protein is Protein orai-2 (ORAI2).